A 252-amino-acid chain; its full sequence is Beta-carotene isomerase D27, chloroplastic (252 aa).

The transit peptide at 1-43 directs the protein to the chloroplast; sequence MDSKMIAHNMSLTPTLAQWKKLRLKPKHTFVVGVLARPTDDIS.

Requires Fe cation as cofactor. Highly expressed in roots. Expressed at low levels in leaves and stems.

The protein resides in the plastid. The protein localises to the chloroplast. It carries out the reaction all-trans-beta-carotene = 9-cis-beta-carotene. Its function is as follows. Involved in strigolactones biosynthesis by catalyzing the isomerization of the C9-C10 double bond in all-trans-beta-carotene leading to 9-cis-beta-carotene and providing the substrate for CCD7. Strigolactones are hormones that inhibit tillering and shoot branching through the MAX-dependent pathway, contribute to the regulation of shoot architectural response to phosphate-limiting conditions and function as rhizosphere signals that stimulate hyphal branching of arbuscular mycorrhizal fungi and trigger seed germination of root parasitic weeds. The protein is Beta-carotene isomerase D27, chloroplastic of Medicago truncatula (Barrel medic).